A 144-amino-acid chain; its full sequence is Transcriptional regulator MraZ (144 aa).

SpoVT-AbrB domains lie at 5 to 47 (EYDH…TLDE) and 76 to 119 (AVEV…DRET).

It belongs to the MraZ family. As to quaternary structure, forms oligomers.

It localises to the cytoplasm. It is found in the nucleoid. This is Transcriptional regulator MraZ from Staphylococcus aureus.